The sequence spans 698 residues: Serine/threonine-protein kinase Nek8 (698 aa).

In terms of domain architecture, Protein kinase spans 4–258; the sequence is YERIRVVGRG…LSHIMAQPLC (255 aa). Residues 10–18 and lysine 33 contribute to the ATP site; that span reads VGRGAFGIV. Aspartate 128 acts as the Proton acceptor in catalysis. Threonine 162 is subject to Phosphothreonine; by autocatalysis. The segment at 278–309 is disordered; the sequence is EKSLTPGPPIASGSTGSRATSARCRGVPRGPV. The span at 288–309 shows a compositional bias: low complexity; sequence ASGSTGSRATSARCRGVPRGPV. RCC1 repeat units lie at residues 416 to 467, 468 to 519, 520 to 585, 586 to 637, and 638 to 690; these read GIIM…LSTD, GELF…LTSP, GRVL…ITAS, GDCY…VGAE, and GEVY…AVRS.

This sequence belongs to the protein kinase superfamily. NEK Ser/Thr protein kinase family. NIMA subfamily. As to quaternary structure, interacts with PKD2; may regulate PKD2 targeting to the cilium. Interacts with ANKS6. Component of a complex containing at least ANKS6, INVS, NEK8 and NPHP3. ANKS6 may organize complex assembly by linking INVS and NPHP3 to NEK8 and INVS may target the complex to the proximal ciliary axoneme. Interacts with ANKS3. Mg(2+) serves as cofactor. Kidney, liver, and testis.

It localises to the cytoplasm. The protein resides in the cytoskeleton. It is found in the cell projection. Its subcellular location is the cilium. The protein localises to the microtubule organizing center. It localises to the centrosome. The protein resides in the cilium axoneme. It carries out the reaction L-seryl-[protein] + ATP = O-phospho-L-seryl-[protein] + ADP + H(+). The catalysed reaction is L-threonyl-[protein] + ATP = O-phospho-L-threonyl-[protein] + ADP + H(+). In terms of biological role, required for renal tubular integrity. May regulate local cytoskeletal structure in kidney tubule epithelial cells. May regulate ciliary biogenesis through targeting of proteins to the cilia. Plays a role in organogenesis and is involved in the regulation of the Hippo signaling pathway. This is Serine/threonine-protein kinase Nek8 (Nek8) from Mus musculus (Mouse).